Here is a 473-residue protein sequence, read N- to C-terminus: MHDNIFLPDAFLAQVQETMPSYLSMDEFIAACKRPLRRSIRVNILKNSVEEFKQRAAEKQWDLEPVPWCDTGFWITRPESDTVKLGSTAEHMAGLFYIQEASSMMPVTALLKDNDDIEMALDMASAPGSKTTQLAAGMKNQGALVANEFSSSRVKVLCSNIQRCGVSNVALTHFDGRVFGGWLPETFDSILLDAPCSGEGTIRKDPDAMHNWSPESVIEIGDTQRDLIESAFHALKLGGVMVYSTCTLNHEENQNICHHLVEQFGDAVTFEPLGDLFESAEKALTKEGFLHIYPQIFDSEGFFVAKIRKNSSTTPPEVKKRLGKFPFAPASNKEAQAIEAELKSTLQLAIPEDNEFWIRDKEVWAFPKRMKPLIGEMRYHRIGFKLAETHKKGYRWQHEAIMALATADNPTCAELNTEQAREWYMGRDVRPDFSGKGETIVTYKGAVIGLGKWVGNRIKNGLPRELVRDGNLF.

S-adenosyl-L-methionine is bound by residues 124–130, glutamate 148, aspartate 175, and aspartate 193; that span reads ASAPGSK. Cysteine 246 serves as the catalytic Nucleophile.

It belongs to the class I-like SAM-binding methyltransferase superfamily. RsmB/NOP family.

The protein resides in the cytoplasm. The catalysed reaction is cytidine(1407) in 16S rRNA + S-adenosyl-L-methionine = 5-methylcytidine(1407) in 16S rRNA + S-adenosyl-L-homocysteine + H(+). Functionally, specifically methylates the cytosine at position 1407 (m5C1407) of 16S rRNA. This chain is Ribosomal RNA small subunit methyltransferase F, found in Aliivibrio fischeri (strain ATCC 700601 / ES114) (Vibrio fischeri).